The chain runs to 620 residues: Sodium-dependent dopamine transporter (620 aa).

The Cytoplasmic segment spans residues 1 to 56 (MSKSKCSVGLMSSVVAPAKEPNAVGPKEVELILVKEQNGVQLTSSTLTNPRQSPVE). The chain crosses the membrane as a discontinuously helical span at residues 57–95 (AQDRETWGKKIDFLLSVIGFAVDLANVWRFPYLCYKNGG). 5 residues coordinate Na(+): Gly75, Ala77, Val78, Asp79, and Asn82. Asp79 contributes to the dopamine binding site. 2 helical membrane passes run 96–127 (GAFLVPYLLFMVIAGMPLFYMELALGQFNREG) and 128–171 (AAGV…FSSF). Ser149 and Gly153 together coordinate dopamine. Residues 172–236 (TTELPWIHCN…SHGIDDLGPP (65 aa)) lie on the Extracellular side of the membrane. Cys180 and Cys189 are oxidised to a cystine. Asn181, Asn188, and Asn205 each carry an N-linked (GlcNAc...) asparagine glycan. 2 helical membrane passes run 237 to 256 (RWQLTACLVLVIVLLYFSLW) and 257 to 287 (KGVKTSGKVVWITATMPYVVLTALLLRGVTL). Over 288–306 (PGAIDGIRAYLSVDFYRLC) the chain is Extracellular. A discontinuously helical membrane pass occupies residues 307–335 (EASVWIDAATQVCFSLGVGFGVLIAFSSY). Gln317 serves as a coordination point for chloride. Phe320 contributes to the dopamine binding site. Na(+) is bound by residues Ser321 and Asn353. Ser321 contacts chloride. Residues 336-376 (NKFTNNCYRDAIVTTSINSLTSFSSGFVVFSFLGYMAQKHS) form a helical membrane-spanning segment. A chloride-binding site is contributed by Ser357. Residues 377–400 (VPIGDVAKDGPGLIFIIYPEAIAT) lie on the Extracellular side of the membrane. 3 helical membrane passes run 401–442 (LPLS…QLLH), 443–466 (RHRELFTLFIVLATFLLSLFCVTN), and 467–499 (GGIYVFTLLDHFAAGTSILFGVLIEAIGVAWFY). Positions 418, 421, and 422 each coordinate Na(+). 2 residues coordinate dopamine: Ser422 and Ala423. Topologically, residues 500–516 (GVGQFSDDIQQMTGQRP) are cytoplasmic. A helical transmembrane segment spans residues 517–542 (SLYWRLCWKLVSPCFLLFVVVVSIVT). The Extracellular portion of the chain corresponds to 543–553 (FRPPHYGAYIF). Residues 554-583 (PDWANALGWVIATSSMAMVPIYAAYKFCSL) traverse the membrane as a helical segment. An interaction with TGFB1I1 region spans residues 561-590 (GWVIATSSMAMVPIYAAYKFCSLPGSFREK). Residues 584-620 (PGSFREKLAYAIAPEKDRELVDRGEVRQFTLRHWLKV) are Cytoplasmic-facing.

This sequence belongs to the sodium:neurotransmitter symporter (SNF) (TC 2.A.22) family. SLC6A3 subfamily. Monomer. Homooligomer; disulfide-linked. Interacts with PRKCABP and TGFB1I1. Interacts (via N-terminus) with SYNGR3 (via N-terminus). Interacts with SLC18A2. Interacts with TOR1A (ATP-bound); TOR1A regulates SLC6A3 subcellular location. Interacts with alpha-synuclein/SNCA. Interacts with SEPTIN4. In terms of tissue distribution, highly expressed in substantia nigra. Expressed in axonal varicosities in dopaminergic nerve terminals (at protein level). Expressed in the striatum (at protein level).

The protein resides in the cell membrane. It is found in the cell projection. It localises to the neuron projection. The protein localises to the axon. It carries out the reaction dopamine(out) + chloride(out) + Na(+)(out) = dopamine(in) + chloride(in) + Na(+)(in). The enzyme catalyses dopamine(out) + chloride(out) + 2 Na(+)(out) = dopamine(in) + chloride(in) + 2 Na(+)(in). The catalysed reaction is (R)-noradrenaline(out) + chloride(out) + Na(+)(out) = (R)-noradrenaline(in) + chloride(in) + Na(+)(in). Its activity is regulated as follows. Inhibited by cocaine, which occupies the same binding site as dopamine. Inhibited by zinc ions. Enhanced by the antibiotic valinomycin. Inhibited by benztropine. Inhibited by GBR 12909 dihydrochloride and amphetamine. Inhibited by mazindol, GBR 12783 dihydrochloride, nomifensine, diclofensine, amfonelic acid, Lu 19005, Win-35428, bupropion and ritalin. Mediates sodium- and chloride-dependent transport of dopamine. Also mediates sodium- and chloride-dependent transport of norepinephrine (also known as noradrenaline). Regulator of light-dependent retinal hyaloid vessel regression, downstream of OPN5 signaling. This Homo sapiens (Human) protein is Sodium-dependent dopamine transporter (SLC6A3).